Here is a 130-residue protein sequence, read N- to C-terminus: MADNDPLASALSGLDNAESVGHLEQTIQPASNEIGSVLEVFYDRGYVDGFQFVDDGKAGRFEVELKGAINECGAVKPRYSAGADEFEKWEKRFLPARDYGTLIVTTSHGVMSHYEAREQGIGGQVIAYVY.

The protein belongs to the universal ribosomal protein uS8 family. In terms of assembly, part of the 30S ribosomal subunit.

Functionally, one of the primary rRNA binding proteins, it binds directly to 16S rRNA central domain where it helps coordinate assembly of the platform of the 30S subunit. This is Small ribosomal subunit protein uS8 from Natronomonas pharaonis (strain ATCC 35678 / DSM 2160 / CIP 103997 / JCM 8858 / NBRC 14720 / NCIMB 2260 / Gabara) (Halobacterium pharaonis).